A 257-amino-acid chain; its full sequence is MLMVISPAKTLDYQTPPAVDQYSQPDLLDHSAELIDVLRQKSPLDIAKLMDISDALANLNVGRYADWQRPFTQNNAKQAVYAFMGDVYEGLDASTLGRPAIGYLQERLRILSGLYGVLRPLDLMQAYRLEMGTRLANGRGKNLYEFWGETVTAKLNEQLEALGQRTLVNLASDEYFKSVKRKALNAAIVTPVFQDRKNGQYKIISFYAKRARGLMARWAAERGVADPDQLRGFDSEGYAFDASASDELTWVFRRDRE.

The protein belongs to the UPF0246 family.

The protein is UPF0246 protein CV_1250 of Chromobacterium violaceum (strain ATCC 12472 / DSM 30191 / JCM 1249 / CCUG 213 / NBRC 12614 / NCIMB 9131 / NCTC 9757 / MK).